The chain runs to 135 residues: Succinate dehydrogenase assembly factor 3, mitochondrial (135 aa).

The segment at 73-101 (KENSNNNDNYNNNNNDNNNDNNNFINIGQ) is disordered. Over residues 75-95 (NSNNNDNYNNNNNDNNNDNNN) the composition is skewed to low complexity.

The protein belongs to the complex I LYR family. SDHAF3 subfamily. In terms of assembly, interacts with the iron-sulfur protein subunit within the SDH catalytic dimer.

It localises to the mitochondrion matrix. Plays an essential role in the assembly of succinate dehydrogenase (SDH), an enzyme complex (also referred to as respiratory complex II) that is a component of both the tricarboxylic acid (TCA) cycle and the mitochondrial electron transport chain, and which couples the oxidation of succinate to fumarate with the reduction of ubiquinone (coenzyme Q) to ubiquinol. Promotes maturation of the iron-sulfur protein subunit of the SDH catalytic dimer, protecting it from the deleterious effects of oxidants. May act together with SDHAF1. This Dictyostelium discoideum (Social amoeba) protein is Succinate dehydrogenase assembly factor 3, mitochondrial (acn9).